Here is a 324-residue protein sequence, read N- to C-terminus: Probable metal transport system membrane protein CPn_0346/CP_0414/CPj0346/CpB0353 (324 aa).

The next 10 membrane-spanning stretches (helical) occupy residues 1 to 21 (MALG…SVFF), 39 to 59 (IQII…TFLV), 64 to 84 (AMYA…VCLF), 94 to 114 (GTLT…IYFI), 125 to 145 (STAL…VFMT), 165 to 185 (EDIF…IFAF), 201 to 221 (LGIP…ACLV), 226 to 246 (AVGV…AKVI), 252 to 272 (SLMA…PASS), and 286 to 306 (SGIS…ISYF).

It belongs to the ABC-3 integral membrane protein family.

It localises to the cell inner membrane. Functionally, part of an ATP-driven transport system CPn_0346/CPn_0347/CPn_0348/CPn_0349 for a metal. The sequence is that of Probable metal transport system membrane protein CPn_0346/CP_0414/CPj0346/CpB0353 from Chlamydia pneumoniae (Chlamydophila pneumoniae).